A 526-amino-acid polypeptide reads, in one-letter code: Hyaluronidase-5 (526 aa).

A signal peptide spans Met-1–Thr-35. 5 disulfide bridges follow: Cys-60-Cys-351, Cys-223-Cys-237, Cys-376-Cys-387, Cys-381-Cys-435, and Cys-437-Cys-443. Glu-147 functions as the Proton donor in the catalytic mechanism. Asn-165 and Asn-179 each carry an N-linked (GlcNAc...) asparagine glycan.

The protein belongs to the glycosyl hydrolase 56 family. Expressed in testis, epididymal sperm and epididymides (at protein level). Expressed at highest levels in testis with lesser amounts in epididymal sperm.

It is found in the cell membrane. The protein resides in the cytoplasmic vesicle. Its subcellular location is the secretory vesicle. The protein localises to the acrosome membrane. It localises to the secreted. The catalysed reaction is Random hydrolysis of (1-&gt;4)-linkages between N-acetyl-beta-D-glucosamine and D-glucuronate residues in hyaluronate.. Catalyzes the hydrolysis of hyaluronan into smaller oligosaccharide fragments. Does not appear to be essential for fertilization. This chain is Hyaluronidase-5, found in Mus musculus (Mouse).